The chain runs to 489 residues: Mitogen-activated protein kinase adapter protein MST50 (489 aa).

Residues 1–56 (MSFNTGTAYAESDADDEYERDIHDSSPIDATDAEASPTESDPPSNEHTPTTYGYRS) are disordered. The segment covering 37–54 (PTESDPPSNEHTPTTYGY) has biased composition (polar residues). The SAM domain occupies 69–132 (WTADECADFI…LRSVYDVKKA (64 aa)). 2 disordered regions span residues 207–285 (PLPH…AAER) and 309–379 (SINI…GSNA). 2 stretches are compositionally biased toward polar residues: residues 256 to 265 (PKATSPTHLQ) and 328 to 346 (ASRS…STFA). One can recognise a Ras-associating domain in the interval 377 to 457 (SNASVEIFKS…PMFMLRKTNN (81 aa)).

In terms of assembly, interacts with MST7 and MST11. Interacts with MCK1, MKK2 and HIK1.

Mitogen-activated protein kinase adapter protein; part of the MST11-MST7-PMK1 MAP kinase (MAPK) cascade that is essential for appressorium formation, penetration and invasive growth. Binds to the MAPKKK MST11 and the MAPKK MST7 to maintain the stability of the MST11-MST7 complex for the phosphorylation of the MAPK PMK1. Is also involved in the MPS1 and OSM1 MAPK pathways, and especially plays a role in the activation of MPS1 in response to cell wall stress. Its function differs in the 3 MAPK pathways. The chain is Mitogen-activated protein kinase adapter protein MST50 from Pyricularia oryzae (strain 70-15 / ATCC MYA-4617 / FGSC 8958) (Rice blast fungus).